Reading from the N-terminus, the 2240-residue chain is Cadherin-89D (2240 aa).

Cadherin domains are found at residues 70–179 (SEGV…APEF), 180–295 (LNVP…PPKF), 296–411 (TEGV…VPEF), 412–528 (EADY…TPKF), and 529–643 (EHGN…APYE). N-linked (GlcNAc...) asparagine glycans are attached at residues N114, N119, N191, N278, N334, N417, N585, N720, N752, N822, N833, N983, N989, N1006, N1255, N1318, N1486, N1529, and N1556. Residues 814–844 (MPSEPTSRNITMGSRFRSRNRSRSSKSKRRL) form a disordered region. 5 consecutive Cadherin domains span residues 824–927 (TMGS…APKF), 928–1087 (NALT…APMF), 1171–1284 (TTKC…APTF), 1285–1389 (KKSW…RPEF), and 1411–1520 (MLPV…PPKS). The span at 829–844 (FRSRNRSRSSKSKRRL) shows a compositional bias: basic residues. Cadherin domains follow at residues 1534-1660 (QHAY…APKF) and 1661-1774 (RGNG…MPVE). Residues 1884–1904 (FVTVVLLALISLGALIAACCY) traverse the membrane as a helical segment. Over 1905–2240 (VCMRQKRRLW…LEFSKSNSLF (336 aa)) the chain is Cytoplasmic. Disordered regions lie at residues 1930-1972 (IAGI…PESV) and 2121-2140 (AHLE…EDSL). Positions 1939–1952 (QKQRRQRQQRHTQR) are enriched in basic residues. Residues 1953 to 1964 (CSKGSTGSQRPT) show a composition bias toward polar residues.

It localises to the cell membrane. Functionally, cadherins are calcium-dependent cell adhesion proteins. They preferentially interact with themselves in a homophilic manner in connecting cells. This is Cadherin-89D (Cad89D) from Drosophila melanogaster (Fruit fly).